Reading from the N-terminus, the 314-residue chain is Olfactory receptor 5P72 (314 aa).

Residues 1–28 (MAFLEVGNHTAVTEFILLGLTDDPVLRV) are Extracellular-facing. Residue Asn8 is glycosylated (N-linked (GlcNAc...) asparagine). Residues 29-49 (VLFTIILCIYLVTVMGNLSTI) traverse the membrane as a helical segment. At 50-57 (LLIRVSSQ) the chain is on the cytoplasmic side. Residues 58–78 (LHHPMYFFLSHLASVDMGLSS) traverse the membrane as a helical segment. Residues 79-102 (SVTPNMLLNFLIERNTISYLGCGI) are Extracellular-facing. Cysteines 100 and 192 form a disulfide. Residues 103 to 123 (QQSLADFFGSVECFLLAAMAY) traverse the membrane as a helical segment. Residues 124–136 (DRFMAICNPLLYS) are Cytoplasmic-facing. Residues 137–157 (TKMSTKVCVQLVVGSYIGGFL) form a helical membrane-spanning segment. Over 158–199 (NASLIMFYFFSFLFCGPNRVDHFFCDFAPLVELSCSDVSVSV) the chain is Extracellular. A helical transmembrane segment spans residues 200–220 (IVISFSAGSVTMITVFVIAVS). Residues 221-240 (YSYILITILKMHSIEGRHKA) are Cytoplasmic-facing. Residues 241–261 (FSTCTSHLTAVTLYYGTITFI) traverse the membrane as a helical segment. Topologically, residues 262 to 274 (YVMPKSSFSTDQN) are extracellular. The chain crosses the membrane as a helical span at residues 275–295 (KVVSVFYMVMIPMLNPLIYSL). At 296 to 314 (RNNEIKGAIKRQLGKKMSC) the chain is on the cytoplasmic side.

This sequence belongs to the G-protein coupled receptor 1 family.

Its subcellular location is the cell membrane. Functionally, potential odorant receptor. This chain is Olfactory receptor 5P72, found in Mus musculus (Mouse).